The primary structure comprises 1482 residues: Type VII secretion system protein EssC (1482 aa).

Residues 1 to 229 lie on the Cytoplasmic side of the membrane; the sequence is MHKLIIKYNK…RPPQPIQKNN (229 aa). A helical membrane pass occupies residues 230-252; sequence TVIWRSIIPPLVMIALTVVIFLV. Topologically, residues 253 to 256 are extracellular; it reads RPIG. A helical transmembrane segment spans residues 257–279; that stretch reads IYILMMIGMSTVTIVFGITTYFS. Topologically, residues 280-1482 are cytoplasmic; the sequence is EKKKYNKDVE…EYQKIKLMEG (1203 aa). FtsK domains follow at residues 652–846 and 997–1183; these read DDIL…QDSN and QGPM…NELT. Residues 672–679 and 1014–1021 each bind ATP; these read GTTGSGKS and GSPGYGRT.

This sequence belongs to the EssC family. In terms of assembly, homooligomer. Interacts with EsaE.

It localises to the cell membrane. Its function is as follows. Component of the type VII secretion system (Ess). Required for the secretion of substrates including EsxA and EsxB. However, unable to support secretion of the substrate protein EsxC. This is Type VII secretion system protein EssC from Staphylococcus aureus (strain MRSA252).